A 308-amino-acid chain; its full sequence is rRNA 2'-O-methyltransferase fibrillarin 1 (308 aa).

The tract at residues 1 to 68 (MRPPVTGGRG…PRGGMKGGSK (68 aa)) is disordered. Gly residues predominate over residues 22–35 (GRGFGGGRSFGGGR). Residues 42–52 (SGPRGRGRGAP) show a composition bias toward basic residues. Over residues 53 to 65 (RGRGGPPRGGMKG) the composition is skewed to gly residues. Residues 156-157 (TT), 175-176 (EF), 200-201 (DA), and 220-223 (DVAQ) contribute to the S-adenosyl-L-methionine site.

It belongs to the methyltransferase superfamily. Fibrillarin family. As to quaternary structure, component of box C/D small nucleolar ribonucleoprotein (snoRNP) particles. Interacts with SKP1A. In terms of tissue distribution, expressed in roots, leaves and flowers. Expressed in stems.

The protein localises to the nucleus. It localises to the nucleolus. The enzyme catalyses a ribonucleotide in rRNA + S-adenosyl-L-methionine = a 2'-O-methylribonucleotide in rRNA + S-adenosyl-L-homocysteine + H(+). It carries out the reaction L-glutaminyl-[histone H2A] + S-adenosyl-L-methionine = N(5)-methyl-L-glutaminyl-[histone H2A] + S-adenosyl-L-homocysteine + H(+). In terms of biological role, S-adenosyl-L-methionine-dependent methyltransferase that has the ability to methylate both RNAs and proteins. Involved in pre-rRNA processing. Utilizes the methyl donor S-adenosyl-L-methionine to catalyze the site-specific 2'-hydroxyl methylation of ribose moieties in pre-ribosomal RNA. Site specificity is provided by a guide RNA that base pairs with the substrate. Methylation occurs at a characteristic distance from the sequence involved in base pairing with the guide RNA. Also acts as a protein methyltransferase by mediating methylation of 'Gln-105' of histone H2A (H2AQ105me), a modification that impairs binding of the FACT complex and is specifically present at 35S ribosomal DNA locus. Binds monophosphate phosphoinositides in vitro. In Arabidopsis thaliana (Mouse-ear cress), this protein is rRNA 2'-O-methyltransferase fibrillarin 1.